Reading from the N-terminus, the 159-residue chain is Putative polyketide cyclase (159 aa).

To polyketide cyclases.

Its function is as follows. Involved in developmentally regulated synthesis of a compound biosynthetically related to polyketide antibiotics which is essential for spore color in Streptomyces coelicolor. The polypeptide is Putative polyketide cyclase (Streptomyces coelicolor (strain ATCC BAA-471 / A3(2) / M145)).